We begin with the raw amino-acid sequence, 103 residues long: BLOC-1-related complex subunit 7 (103 aa).

This sequence belongs to the BORCS7 family.

It localises to the lysosome membrane. Its function is as follows. As part of a BORC-like complex may play a role in lysosomes movement and localization at the cell periphery. Associated with the cytosolic face of lysosomes, this complex may couple lysosomes to microtubule plus-end-directed kinesin motor. The chain is BLOC-1-related complex subunit 7 from Danio rerio (Zebrafish).